A 354-amino-acid chain; its full sequence is Magnesium-protoporphyrin IX monomethyl ester [oxidative] cyclase (354 aa).

Belongs to the AcsF family. Fe cation is required as a cofactor.

The protein localises to the plastid. Its subcellular location is the chloroplast. It catalyses the reaction Mg-protoporphyrin IX 13-monomethyl ester + 3 NADPH + 3 O2 + 2 H(+) = 3,8-divinyl protochlorophyllide a + 3 NADP(+) + 5 H2O. It functions in the pathway porphyrin-containing compound metabolism; chlorophyll biosynthesis (light-independent). Catalyzes the formation of the isocyclic ring in chlorophyll biosynthesis. Mediates the cyclase reaction, which results in the formation of divinylprotochlorophyllide (Pchlide) characteristic of all chlorophylls from magnesium-protoporphyrin IX 13-monomethyl ester (MgPMME). The chain is Magnesium-protoporphyrin IX monomethyl ester [oxidative] cyclase from Cyanidium caldarium (Red alga).